The following is a 308-amino-acid chain: MISPAQDPYASRTDRSSAIIARQDPVVYGEGKFADALSADQVQSYERDGFLLLENLFSDEEVAALLAEVERMTRDPAIVRREEAITEPGSNAVRSIFMVHVLSPILGRLVRDPRLANAARQILGSEVYVHQSRANMKPGFKGKEFYWHSDFETWHVEDGMPSMRALSCSVLLTDNNETNGPLMLVPGSHRQFISCVGETPRDHYKQSLKKQEYGVPDPVSLQLLAEQGGISTMTGKAGSVVFFDCNTMHGSNSNISPWPRANVFMVYNSMENTLNPPKYGLNPRPEHIATRQAFKAVRPLDSLKLVER.

Gln-131 lines the L-ectoine pocket. Lys-137 lines the 2-oxoglutarate pocket. Fe cation contacts are provided by His-148, Asp-150, and His-249.

The protein belongs to the PhyH family. EctD subfamily. As to quaternary structure, homodimer. Fe(2+) serves as cofactor.

It catalyses the reaction L-ectoine + 2-oxoglutarate + O2 = 5-hydroxyectoine + succinate + CO2. In terms of biological role, involved in the biosynthesis of 5-hydroxyectoine, called compatible solute, which helps organisms to survive extreme osmotic stress by acting as a highly soluble organic osmolyte. Catalyzes the 2-oxoglutarate-dependent selective hydroxylation of L-ectoine to yield (4S,5S)-5-hydroxyectoine. This is Ectoine dioxygenase from Bordetella bronchiseptica (strain ATCC BAA-588 / NCTC 13252 / RB50) (Alcaligenes bronchisepticus).